The following is a 374-amino-acid chain: DNA replication and repair protein RecF (374 aa).

30–37 (GPNAQGKS) lines the ATP pocket.

Belongs to the RecF family.

It localises to the cytoplasm. In terms of biological role, the RecF protein is involved in DNA metabolism; it is required for DNA replication and normal SOS inducibility. RecF binds preferentially to single-stranded, linear DNA. It also seems to bind ATP. The chain is DNA replication and repair protein RecF from Acaryochloris marina (strain MBIC 11017).